Consider the following 336-residue polypeptide: 4-hydroxythreonine-4-phosphate dehydrogenase (336 aa).

2 residues coordinate substrate: His-142 and Thr-143. A divalent metal cation is bound by residues His-172, His-217, and His-274. Substrate is bound by residues Lys-282, Asn-291, and Arg-300.

It belongs to the PdxA family. As to quaternary structure, homodimer. Requires Zn(2+) as cofactor. Mg(2+) serves as cofactor. Co(2+) is required as a cofactor.

It localises to the cytoplasm. The catalysed reaction is 4-(phosphooxy)-L-threonine + NAD(+) = 3-amino-2-oxopropyl phosphate + CO2 + NADH. The protein operates within cofactor biosynthesis; pyridoxine 5'-phosphate biosynthesis; pyridoxine 5'-phosphate from D-erythrose 4-phosphate: step 4/5. In terms of biological role, catalyzes the NAD(P)-dependent oxidation of 4-(phosphooxy)-L-threonine (HTP) into 2-amino-3-oxo-4-(phosphooxy)butyric acid which spontaneously decarboxylates to form 3-amino-2-oxopropyl phosphate (AHAP). The polypeptide is 4-hydroxythreonine-4-phosphate dehydrogenase (Trichlorobacter lovleyi (strain ATCC BAA-1151 / DSM 17278 / SZ) (Geobacter lovleyi)).